The primary structure comprises 107 residues: Flagellar hook-basal body complex protein FliE (107 aa).

The protein belongs to the FliE family.

It localises to the bacterial flagellum basal body. This is Flagellar hook-basal body complex protein FliE from Mesorhizobium japonicum (strain LMG 29417 / CECT 9101 / MAFF 303099) (Mesorhizobium loti (strain MAFF 303099)).